Consider the following 500-residue polypeptide: Lysine--tRNA ligase (500 aa).

Residues E406 and E413 each coordinate Mg(2+).

This sequence belongs to the class-II aminoacyl-tRNA synthetase family. Homodimer. Mg(2+) is required as a cofactor.

Its subcellular location is the cytoplasm. The catalysed reaction is tRNA(Lys) + L-lysine + ATP = L-lysyl-tRNA(Lys) + AMP + diphosphate. The protein is Lysine--tRNA ligase of Sulfolobus acidocaldarius (strain ATCC 33909 / DSM 639 / JCM 8929 / NBRC 15157 / NCIMB 11770).